A 502-amino-acid polypeptide reads, in one-letter code: Glycerol kinase (502 aa).

Position 12 (threonine 12) interacts with ADP. Positions 12, 13, and 14 each coordinate ATP. Residue threonine 12 coordinates sn-glycerol 3-phosphate. ADP is bound at residue arginine 16. Positions 82, 83, 134, and 243 each coordinate sn-glycerol 3-phosphate. Glycerol contacts are provided by arginine 82, glutamate 83, tyrosine 134, aspartate 243, and glutamine 244. Positions 265 and 308 each coordinate ADP. Residues threonine 265, glycine 308, glutamine 312, and glycine 412 each coordinate ATP. Glycine 412 serves as a coordination point for ADP.

It belongs to the FGGY kinase family.

The enzyme catalyses glycerol + ATP = sn-glycerol 3-phosphate + ADP + H(+). Its pathway is polyol metabolism; glycerol degradation via glycerol kinase pathway; sn-glycerol 3-phosphate from glycerol: step 1/1. With respect to regulation, inhibited by fructose 1,6-bisphosphate (FBP). Its function is as follows. Key enzyme in the regulation of glycerol uptake and metabolism. Catalyzes the phosphorylation of glycerol to yield sn-glycerol 3-phosphate. This chain is Glycerol kinase, found in Methylobacterium nodulans (strain LMG 21967 / CNCM I-2342 / ORS 2060).